Consider the following 495-residue polypeptide: Fusicoccadiene 8-ol C-16 hydroxylase (495 aa).

The chain crosses the membrane as a helical span at residues 12–32 (VLLALIVWIGTTIIYNIYFHP). 2 N-linked (GlcNAc...) asparagine glycosylation sites follow: Asn-249 and Asn-317. Cys-439 contacts heme.

Belongs to the cytochrome P450 family. It depends on heme as a cofactor.

It localises to the membrane. It functions in the pathway mycotoxin biosynthesis. In terms of biological role, cytochrome P450 monooxygenase; part of the gene cluster that mediates the biosynthesis of the diterpene glucoside brassicicene C. In the first step of the brassicicene C biosynthesis, the bifunctional diterpene synthase bsc8 that possesses both prenyl transferase and terpene cyclase activity, converts isopentenyl diphosphate and dimethylallyl diphosphate into geranylgeranyl diphosphate (GGDP) that is further converted into fusicocca-2,10(14)-diene, the first precursor for brassicicene C. Fusicocca-2,10(14)-diene is then substrate of cytochrome P450 monooxygenase bsc1 for hydroxylation at the C-8 position. Oxidation at C-16 position to aldehyde is then catalyzed by the cytochrome P450 monooyxygenase bsc7, yielding fusicocca-2,10(14)-diene-8-beta,16-diol. Follows the isomerization of the double bond and reduction of aldehyde to alcohol catalyzed by the short-chain dehydrogenase/reductase bsc3 to yield the diol compound fusicocca-1,10(14)-diene-8 beta,16-diol. The next step is the oxidation at the C-3 position of fusicocca-2,10(14)-diene-8-beta,16-diol catalyzed by the alpha-ketoglutarate dependent dioxygenase bsc9, to produce a triol compound. Methylation of the hydroxy group at position 16 is performed by the methyltransferase bsc6. 16-O-methylation is followed by oxidation at the C-13 position to ketone and an alkyl shift of the methyl group leads to brassicicene C. Although the probable acetyltransferase bsc4 is included in the gene cluster, no acetylation reactions are necessary for brassicicene C biosynthesis. However, the fact that brassicicene E, which is a structurally related compound having an acetoxy group at position 12, was previously isolated from another strain of A.brassicicola suggests that the ATCC 96836 strain might also produce a small amount of brassicicene E. This chain is Fusicoccadiene 8-ol C-16 hydroxylase, found in Alternaria brassicicola (Dark leaf spot agent).